Reading from the N-terminus, the 502-residue chain is MAISLLCLFLITLVSLIFVVKKIKHSKWDLPPSPPTFPVIGNLHQVGELPHRSFQRLAERTGHVMLLHFGFVPVTVISSREAAEEVLRTHDLKCCTRPKLVGSRLISRGFKDISFTPYGEEWRERRKFLVRELFCFKKVQYFGYIVEEECNLLVKKLTESAVGRPPVDLSKSLFWLAASILFRIAFGQSFHDNKFIDEDKIDELIFETETAQASFTCSDFFPIAGLGWLADWISGKHRWLNNVFFKLDALFQRVIDDHSDPGRWKDHKDIVDVMLDVMHKQGKDDSLRLTIDHIKGFLTNIIIAGIDTGALTMIWAMTELARNPELMKNVQGEIRDSFGNNKERITKEDLNKVPFLNMVIKETFRLHPVAPLLLPRETMTHIKVQGYDIPPKRRILVNTWAIGRDPTLWINPEEFNPERFINNPVDYRGQHFELLPFGSGRRICPGMGLGITIVELGLLNLLYFFDWRAPDGMTHKDIDTEEAGILTVVKKVPLKLVPVRVQ.

The chain crosses the membrane as a helical span at residues 1-21; that stretch reads MAISLLCLFLITLVSLIFVVK. Residue Cys-444 coordinates heme.

The protein belongs to the cytochrome P450 family. Requires heme as cofactor.

The protein localises to the membrane. The chain is Cytochrome P450 71B16 (CYP71B16) from Arabidopsis thaliana (Mouse-ear cress).